A 131-amino-acid polypeptide reads, in one-letter code: Small ribosomal subunit protein uS12 (131 aa).

Residue Asp89 is modified to 3-methylthioaspartic acid. A disordered region spans residues 106-131 (GVDGRKQGRSKYGAKKAKVAKTASAK). Residues 112-124 (QGRSKYGAKKAKV) are compositionally biased toward basic residues.

The protein belongs to the universal ribosomal protein uS12 family. Part of the 30S ribosomal subunit. Contacts proteins S8 and S17. May interact with IF1 in the 30S initiation complex.

In terms of biological role, with S4 and S5 plays an important role in translational accuracy. Functionally, interacts with and stabilizes bases of the 16S rRNA that are involved in tRNA selection in the A site and with the mRNA backbone. Located at the interface of the 30S and 50S subunits, it traverses the body of the 30S subunit contacting proteins on the other side and probably holding the rRNA structure together. The combined cluster of proteins S8, S12 and S17 appears to hold together the shoulder and platform of the 30S subunit. The chain is Small ribosomal subunit protein uS12 from Endomicrobium trichonymphae.